The sequence spans 430 residues: MTVKTEAARSTLTYSRMRGMVAILIAFMKQRRMGLNDFIQKLANNSYACKHPEVQSYLKISQPQEPELMNANPSPPPSPSQQINLGPSSNPHAKPSDFHFLKVIGKGSFGKVLLARHKAEEAFYAVKVLQKKAILKKKEEKHIMSERNVLLKNVKHPFLVGLHFSFQTADKLYFVLDYINGGELFYHLQRERCFLEPRARFYAAEIASALGYLHSLNIVYRDLKPENILLDSQGHIVLTDFGLCKENIEHNGTTSTFCGTPEYLAPEVLHKQPYDRTVDWWCLGAVLYEMLYGLPPFYSRNTAEMYDNILNKPLQLKNITNSARHLLEGLLQKDRTKRLGAKDDFMEIKSHIFFSLINWDDLINKKITPPFNPNVSGPSDLRHFDPEFTEEPVPSSIGRSPDSILVTASVKEAAEAFLGFSYAPPMDSFL.

A necessary for localization to the mitochondria region spans residues 1–60 (MTVKTEAARSTLTYSRMRGMVAILIAFMKQRRMGLNDFIQKLANNSYACKHPEVQSYLKI). The tract at residues 66 to 92 (PELMNANPSPPPSPSQQINLGPSSNPH) is disordered. S74 bears the Phosphoserine mark. The residue at position 78 (S78) is a Phosphoserine; by MAPK7. Residues 81 to 91 (QQINLGPSSNP) show a composition bias toward polar residues. Residues 98–354 (FHFLKVIGKG…FMEIKSHIFF (257 aa)) enclose the Protein kinase domain. ATP is bound by residues 104 to 112 (IGKGSFGKV) and K127. The Nuclear localization signal signature appears at 131 to 141 (KKAILKKKEEK). D222 functions as the Proton acceptor in the catalytic mechanism. T256 bears the Phosphothreonine; by PDPK1 mark. The AGC-kinase C-terminal domain occupies 355–430 (SLINWDDLIN…SYAPPMDSFL (76 aa)). T368 is subject to Phosphothreonine; by PKA. S396, S400, and S421 each carry phosphoserine.

The protein belongs to the protein kinase superfamily. AGC Ser/Thr protein kinase family. In terms of assembly, homodimer; disulfide-linked. Forms a trimeric complex with FBXW7 and NOTCH1. Interacts with MAPK3/ERK1, MAPK1/ERK2, MAP2K1/MEK1, MAP2K2/MEK2, NEDD4, NEDD4L, MAPK7, CREB1, SLC9A3R2/NHERF2 and KCNJ1/ROMK1. Associates with the mammalian target of rapamycin complex 2 (mTORC2) via an interaction with MAPKAP1/SIN1. Interacts with MAPT/TAU. In terms of processing, regulated by phosphorylation. Activated by phosphorylation on Ser-421 by mTORC2, transforming it into a substrate for PDPK1 which phosphorylates it on Thr-256. Phosphorylation on Ser-396 and Ser-400 are also essential for its activity. Phosphorylation on Ser-78 by MAPK7 is required for growth factor-induced cell cycle progression. Ubiquitinated by NEDD4L; which promotes proteasomal degradation. Ubiquitinated by SYVN1 at the endoplasmic reticulum; which promotes rapid proteasomal degradation and maintains a high turnover rate in resting cells. Expressed in most tissues with highest levels in the ovary, thymus and lung. In the kidney, expressed within glomeruli of the cortex, at low levels in outer medulla and moderate levels in inner medulla and papilla.

It localises to the cytoplasm. The protein resides in the nucleus. It is found in the endoplasmic reticulum membrane. The protein localises to the cell membrane. Its subcellular location is the mitochondrion. The enzyme catalyses L-seryl-[protein] + ATP = O-phospho-L-seryl-[protein] + ADP + H(+). It catalyses the reaction L-threonyl-[protein] + ATP = O-phospho-L-threonyl-[protein] + ADP + H(+). With respect to regulation, two specific sites, one in the kinase domain (Thr-256) and the other in the C-terminal regulatory region (Ser-421), need to be phosphorylated for its full activation. Phosphorylation at Ser-396 and Ser-400 are also essential for its activity. Activated by WNK1, WNK2, WNK3 and WNK4. Functionally, serine/threonine-protein kinase which is involved in the regulation of a wide variety of ion channels, membrane transporters, cellular enzymes, transcription factors, neuronal excitability, cell growth, proliferation, survival, migration and apoptosis. Plays an important role in cellular stress response. Contributes to regulation of renal Na(+) retention, renal K(+) elimination, salt appetite, gastric acid secretion, intestinal Na(+)/H(+) exchange and nutrient transport, insulin-dependent salt sensitivity of blood pressure, salt sensitivity of peripheral glucose uptake, cardiac repolarization and memory consolidation. Up-regulates Na(+) channels: SCNN1A/ENAC, SCN5A and ASIC1/ACCN2, K(+) channels: KCNJ1/ROMK1, KCNA1-5, KCNQ1-5 and KCNE1, epithelial Ca(2+) channels: TRPV5 and TRPV6, chloride channels: BSND, CLCN2 and CFTR, glutamate transporters: SLC1A3/EAAT1, SLC1A2 /EAAT2, SLC1A1/EAAT3, SLC1A6/EAAT4 and SLC1A7/EAAT5, amino acid transporters: SLC1A5/ASCT2, SLC38A1/SN1 and SLC6A19, creatine transporter: SLC6A8, Na(+)/dicarboxylate cotransporter: SLC13A2/NADC1, Na(+)-dependent phosphate cotransporter: SLC34A2/NAPI-2B, glutamate receptor: GRIK2/GLUR6. Up-regulates carriers: SLC9A3/NHE3, SLC12A1/NKCC2, SLC12A3/NCC, SLC5A3/SMIT, SLC2A1/GLUT1, SLC5A1/SGLT1 and SLC15A2/PEPT2. Regulates enzymes: GSK3A/B, PMM2 and Na(+)/K(+) ATPase, and transcription factors: CTNNB1 and nuclear factor NF-kappa-B. Stimulates sodium transport into epithelial cells by enhancing the stability and expression of SCNN1A/ENAC. This is achieved by phosphorylating the NEDD4L ubiquitin E3 ligase, promoting its interaction with 14-3-3 proteins, thereby preventing it from binding to SCNN1A/ENAC and targeting it for degradation. Regulates store-operated Ca(+2) entry (SOCE) by stimulating ORAI1 and STIM1. Regulates KCNJ1/ROMK1 directly via its phosphorylation or indirectly via increased interaction with SLC9A3R2/NHERF2. Phosphorylates MDM2 and activates MDM2-dependent ubiquitination of p53/TP53. Phosphorylates SLC2A4/GLUT4 and up-regulates its activity. Phosphorylates APBB1/FE65 and promotes its localization to the nucleus. Phosphorylates FBXW7 and plays an inhibitory role in the NOTCH1 signaling. Phosphorylates FOXO1 resulting in its relocalization from the nucleus to the cytoplasm. Phosphorylates FOXO3, promoting its exit from the nucleus and interference with FOXO3-dependent transcription. Phosphorylates BRAF and MAP3K3/MEKK3 and inhibits their activity. Phosphorylates SLC9A3/NHE3 in response to dexamethasone, resulting in its activation and increased localization at the cell membrane. Phosphorylates CREB1. Necessary for vascular remodeling during angiogenesis. Phosphorylates MAPT/TAU and mediates microtubule depolymerization and neurite formation in hippocampal neurons. Phosphorylates MAPK1/ERK2 and activates it by enhancing its interaction with MAP2K1/MEK1 and MAP2K2/MEK2. May also play an important role in the development of particular groups of neurons in the postnatal brain. The sequence is that of Serine/threonine-protein kinase Sgk1 (Sgk1) from Rattus norvegicus (Rat).